A 414-amino-acid polypeptide reads, in one-letter code: Sex comb on midleg-like protein 4 (414 aa).

Residues Ser-55 and Ser-65 each carry the phosphoserine modification. Residues 257–276 (HRGSLHPSSSLYCKRQNSGD) show a composition bias toward polar residues. The interval 257 to 343 (HRGSLHPSSS…DARRPRSRNP (87 aa)) is disordered. The span at 284 to 304 (AATAGGPRTSPMSSGGPSAPG) shows a compositional bias: low complexity. One can recognise an SAM domain in the interval 288 to 354 (GGPRTSPMSS…AWTVEDVVWF (67 aa)). Positions 312-332 (PKRNTTSLEGNRCASSPSQDA) are enriched in polar residues.

Belongs to the SCM family.

It is found in the nucleus. Putative Polycomb group (PcG) protein. PcG proteins act by forming multiprotein complexes, which are required to maintain the transcriptionally repressive state of homeotic genes throughout development. The sequence is that of Sex comb on midleg-like protein 4 (SCML4) from Homo sapiens (Human).